A 343-amino-acid chain; its full sequence is Dihydroorotate dehydrogenase (quinone) (343 aa).

FMN contacts are provided by residues 58-62 (AGYDK) and Ser-82. A substrate-binding site is contributed by Lys-62. 107–111 (NRMGF) is a binding site for substrate. 2 residues coordinate FMN: Asn-136 and Asn-167. Asn-167 contributes to the substrate binding site. The active-site Nucleophile is Ser-170. Asn-172 contacts substrate. Positions 206 and 234 each coordinate FMN. 235 to 236 (NT) contacts substrate. Residues Gly-256, Gly-285, and 306–307 (YS) each bind FMN.

It belongs to the dihydroorotate dehydrogenase family. Type 2 subfamily. As to quaternary structure, monomer. Requires FMN as cofactor.

It localises to the cell membrane. It carries out the reaction (S)-dihydroorotate + a quinone = orotate + a quinol. It participates in pyrimidine metabolism; UMP biosynthesis via de novo pathway; orotate from (S)-dihydroorotate (quinone route): step 1/1. Functionally, catalyzes the conversion of dihydroorotate to orotate with quinone as electron acceptor. The chain is Dihydroorotate dehydrogenase (quinone) from Erythrobacter litoralis (strain HTCC2594).